We begin with the raw amino-acid sequence, 105 residues long: Phosphoribosyl-ATP pyrophosphatase (105 aa).

Belongs to the PRA-PH family.

It localises to the cytoplasm. The enzyme catalyses 1-(5-phospho-beta-D-ribosyl)-ATP + H2O = 1-(5-phospho-beta-D-ribosyl)-5'-AMP + diphosphate + H(+). Its pathway is amino-acid biosynthesis; L-histidine biosynthesis; L-histidine from 5-phospho-alpha-D-ribose 1-diphosphate: step 2/9. This is Phosphoribosyl-ATP pyrophosphatase from Vesicomyosocius okutanii subsp. Calyptogena okutanii (strain HA).